The following is a 1725-amino-acid chain: Latrophilin Cirl (1725 aa).

The Extracellular portion of the chain corresponds to 1–757 (MALNELGNCA…LFTMFDGNMR (757 aa)). One can recognise an SUEL-type lectin domain in the interval 18-107 (ACEGKQLTIE…KYLEAHYQCI (90 aa)). An N-linked (GlcNAc...) asparagine glycan is attached at asparagine 135. Residues 164–284 (AVQPTHSTPS…SAANNSVNIG (121 aa)) form a disordered region. Composition is skewed to low complexity over residues 167–176 (PTHSTPSSST) and 224–236 (SSSS…SAGN). Residues asparagine 236, asparagine 278, asparagine 326, asparagine 388, asparagine 645, asparagine 693, and asparagine 720 are each glycosylated (N-linked (GlcNAc...) asparagine). The segment covering 259–282 (LLTTKSSPNRTPGTTASAANNSVN) has biased composition (polar residues). Positions 361–390 (DDEYDDDLPAASSTTPQPSNNGGDCVHNSS) are disordered. Residues 371-390 (ASSTTPQPSNNGGDCVHNSS) show a composition bias toward polar residues. The region spanning 551–744 (RNVVQKVKNI…AILMDVVDEH (194 aa)) is the GAIN-B domain. Intrachain disulfides connect cysteine 699/cysteine 726 and cysteine 714/cysteine 728. The tract at residues 699-744 (CVFWNYIDHAWSANGCSLESTNRTHSVCSCNHLTNFAILMDVVDEH) is GPS. A helical transmembrane segment spans residues 758–778 (IFIYISVAICVVFIIIALLTL). Residues 779–791 (KLFNGVFVKSART) lie on the Cytoplasmic side of the membrane. Residues 792–812 (SIYSSIYICLLAIELLFLLGI) form a helical membrane-spanning segment. Over 813 to 818 (EQTETS) the chain is Extracellular. The chain crosses the membrane as a helical span at residues 819–839 (IFCGFITVFLHCAILSGTAWF). Residues 840–865 (CYEAFHSYSTLTSDELLLEVDQTPKV) lie on the Cytoplasmic side of the membrane. Residues 866 to 886 (NCYYLLSYGLSLSVVAISLVI) form a helical membrane-spanning segment. The Extracellular segment spans residues 887-910 (DPSTYTQNDYCVLMEANALFYSTF). A helical transmembrane segment spans residues 911–931 (VAPVLIFFVAAITYTFLSWII). Topologically, residues 932-958 (MRRKSRTALKTKEHTRLANVRFDIRCS) are cytoplasmic. Residues 959–979 (FVFLLLLSVVWCCAYFYLRGA) traverse the membrane as a helical segment. Topologically, residues 980-986 (KLDEDGA) are extracellular. A helical transmembrane segment spans residues 987 to 1007 (PIYGYCFICFNTLLGIYIFVF). Residues 1008 to 1725 (HCIQNEKIRR…VRCYLEPLAK (718 aa)) lie on the Cytoplasmic side of the membrane. A disordered region spans residues 1056–1088 (TANQSAGTLSKSKSKLPLGAGDEARDGDAQQQQ). Phosphoserine is present on serine 1153. 4 disordered regions span residues 1236 to 1263 (HNNQ…LHSR), 1309 to 1337 (QQLQ…AEQH), 1472 to 1555 (GGGS…SDER), and 1636 to 1705 (LFGH…QARH). The span at 1237–1246 (NNQHGKKKRG) shows a compositional bias: basic residues. Phosphoserine occurs at positions 1255 and 1262. Residues 1309–1327 (QQLQQQQLRQQRQQQQQQL) show a composition bias toward low complexity. Residues serine 1328 and serine 1329 each carry the phosphoserine modification. Residues 1478-1496 (GGSVTSRSQQQQQQQLKQK) are compositionally biased toward low complexity. Acidic residues-rich tracts occupy residues 1505–1522 (DDDD…DEVT) and 1532–1543 (CDDEDNESDIDD). The span at 1651–1666 (QTPAQKRQQLQKLSPQ) shows a compositional bias: polar residues. Over residues 1667–1683 (STTSSSSHTSHSNPQHA) the composition is skewed to low complexity. Positions 1684–1693 (PAHHLQHHHT) are enriched in basic residues. A compositionally biased stretch (low complexity) spans 1694–1705 (QQQQQQQQQARH).

The protein belongs to the G-protein coupled receptor 2 family. LN-TM7 subfamily. Forms a heterodimer, consisting of a large extracellular region non-covalently linked to a seven-transmembrane moiety. Proteolytically cleaved into 2 subunits, an extracellular subunit and a seven-transmembrane subunit.

The protein resides in the cell membrane. This Drosophila mojavensis (Fruit fly) protein is Latrophilin Cirl.